Reading from the N-terminus, the 552-residue chain is MTDVKKSIRANRGTELECLGWEQEAVLRMLRNNLDPEVAEKPEDLIVYGGIGKAARDWDAFHAIEHSLKTLKNDETLLVQSGKPVGMFRTHPQAPRVLLANSVLVPKWADWEHFHELEKKGLMMYGQMTAGSWIYIGSQGILQGTYETFAELARQHFGGSLKGTLTLTAGLGGMGGAQPLSVTMNEGVVIAVEVDEKRIDKRIETKYCDRKTASIEEALAWAEEAKLAGKPLSIALLGNAAEVHHTLLNRGVKIDIVTDQTSAHDPLIGYVPEGYSLDEADRLRQDTPELYVRLAKQSMKKHVEAMLAFQQKGSIVFDYGNNIRQVAKDEGLENAFDFPGFVPAYIRPLFCEGKGPFRWAALSGDPADIYRTDALLKELFPTNKALHRWIDMAQEKVTFQGLPSRICWLGYGERKKMGLAINELVRTGELKAPVVIGRDHLDCGSVASPNRETEAMKDGSDAVGDWAVLNALVNTAAGASWVSFHHGGGVGMGYSLHAGMVAVADGSELADERLARVLTSDPGMGIIRHADAGYERAVEVAKEQDIIVPMQK.

Residues 49–50, Gln-127, 173–175, Glu-193, Arg-198, 239–240, 260–264, 270–271, and Tyr-319 contribute to the NAD(+) site; these read GG, GMG, NA, QTSAH, and YV. Cys-407 is an active-site residue. NAD(+) is bound at residue Gly-489.

This sequence belongs to the urocanase family. In terms of assembly, composed of at least two subunits. It depends on NAD(+) as a cofactor.

The protein resides in the cytoplasm. It catalyses the reaction 4-imidazolone-5-propanoate = trans-urocanate + H2O. It participates in amino-acid degradation; L-histidine degradation into L-glutamate; N-formimidoyl-L-glutamate from L-histidine: step 2/3. Functionally, catalyzes the conversion of urocanate to 4-imidazolone-5-propionate. The chain is Urocanate hydratase from Bacillus subtilis (strain 168).